Reading from the N-terminus, the 237-residue chain is Ribonuclease PH (237 aa).

Residues arginine 86 and glycine 124–arginine 126 each bind phosphate.

It belongs to the RNase PH family. In terms of assembly, homohexameric ring arranged as a trimer of dimers.

It catalyses the reaction tRNA(n+1) + phosphate = tRNA(n) + a ribonucleoside 5'-diphosphate. Functionally, phosphorolytic 3'-5' exoribonuclease that plays an important role in tRNA 3'-end maturation. Removes nucleotide residues following the 3'-CCA terminus of tRNAs; can also add nucleotides to the ends of RNA molecules by using nucleoside diphosphates as substrates, but this may not be physiologically important. Probably plays a role in initiation of 16S rRNA degradation (leading to ribosome degradation) during starvation. This is Ribonuclease PH from Nitrobacter winogradskyi (strain ATCC 25391 / DSM 10237 / CIP 104748 / NCIMB 11846 / Nb-255).